The following is a 519-amino-acid chain: Cysteine--tRNA ligase (519 aa).

Zn(2+) is bound at residue Cys30. The 'HIGH' region motif lies at 32 to 42; that stretch reads PTVYDRAHLGN. 3 residues coordinate Zn(2+): Cys221, His253, and Glu257. Positions 286 to 290 match the 'KMSKS' region motif; sequence KMSKS. Lys289 provides a ligand contact to ATP.

This sequence belongs to the class-I aminoacyl-tRNA synthetase family. Monomer. Zn(2+) is required as a cofactor.

The protein localises to the cytoplasm. The enzyme catalyses tRNA(Cys) + L-cysteine + ATP = L-cysteinyl-tRNA(Cys) + AMP + diphosphate. The polypeptide is Cysteine--tRNA ligase (Cereibacter sphaeroides (strain KD131 / KCTC 12085) (Rhodobacter sphaeroides)).